Here is a 317-residue protein sequence, read N- to C-terminus: Beta-ketoacyl-[acyl-carrier-protein] synthase III (317 aa).

Catalysis depends on residues cysteine 112 and histidine 244. The tract at residues 245–249 is ACP-binding; it reads QANLR. Asparagine 274 is a catalytic residue.

The protein belongs to the thiolase-like superfamily. FabH family. Homodimer.

It localises to the cytoplasm. The catalysed reaction is malonyl-[ACP] + acetyl-CoA + H(+) = 3-oxobutanoyl-[ACP] + CO2 + CoA. It functions in the pathway lipid metabolism; fatty acid biosynthesis. Functionally, catalyzes the condensation reaction of fatty acid synthesis by the addition to an acyl acceptor of two carbons from malonyl-ACP. Catalyzes the first condensation reaction which initiates fatty acid synthesis and may therefore play a role in governing the total rate of fatty acid production. Possesses both acetoacetyl-ACP synthase and acetyl transacylase activities. Its substrate specificity determines the biosynthesis of branched-chain and/or straight-chain of fatty acids. The polypeptide is Beta-ketoacyl-[acyl-carrier-protein] synthase III (Shigella dysenteriae serotype 1 (strain Sd197)).